The sequence spans 125 residues: Ribosome maturation factor RimP (125 aa).

The protein belongs to the RimP family.

It is found in the cytoplasm. In terms of biological role, required for maturation of 30S ribosomal subunits. The polypeptide is Ribosome maturation factor RimP (Rickettsia canadensis (strain McKiel)).